The following is a 324-amino-acid chain: Putative S-adenosyl-L-methionine-dependent methyltransferase MMAR_1059 (324 aa).

S-adenosyl-L-methionine contacts are provided by residues Asp-138 and 167–168 (DL).

It belongs to the UPF0677 family.

Its function is as follows. Exhibits S-adenosyl-L-methionine-dependent methyltransferase activity. The protein is Putative S-adenosyl-L-methionine-dependent methyltransferase MMAR_1059 of Mycobacterium marinum (strain ATCC BAA-535 / M).